A 205-amino-acid polypeptide reads, in one-letter code: Ypt/Rab-type GTPase avaA (205 aa).

GTP-binding positions include 17–23 (SGVGKTS), 33–40 (FSGSYKAT), Gly66, 125–128 (NKID), and 157–159 (SAK). Positions 37–45 (YKATIGADF) match the Effector region motif. 2 S-geranylgeranyl cysteine lipidation sites follow: Cys203 and Cys205. At Cys205 the chain carries Cysteine methyl ester.

The protein belongs to the small GTPase superfamily. Rab family.

Its activity is regulated as follows. Rab activation is generally mediated by a guanine exchange factor (GEF), while inactivation through hydrolysis of bound GTP is catalyzed by a GTPase activating protein (GAP). Its function is as follows. Ypt/Rab-type GTPases are key regulators of membrane trafficking and intracellular vesicular transport. They act as molecular switches that convert between GTP-bound and GDP-bound states, and regulate virtually all steps of membrane traffic from the formation of the transport vesicle at the donor membrane to its fusion at the target membrane. In the GDP-bound state, Ypt proteins are predominantly cytosolic, solubilized through the interaction with a GDP dissociation inhibitor (GDI). In the GTP-bound state, the proteins are membrane bound and interact with specific effector proteins that select cargo, promote vesicle movement, or verify the correct site of fusion. AvaA functions in vacuolar biogenesis. This is Ypt/Rab-type GTPase avaA from Emericella nidulans (strain FGSC A4 / ATCC 38163 / CBS 112.46 / NRRL 194 / M139) (Aspergillus nidulans).